We begin with the raw amino-acid sequence, 78 residues long: Large ribosomal subunit protein bL28 (78 aa).

It belongs to the bacterial ribosomal protein bL28 family.

This chain is Large ribosomal subunit protein bL28, found in Haemophilus influenzae (strain 86-028NP).